The chain runs to 99 residues: Acylphosphatase-1 (99 aa).

The 91-residue stretch at 9 to 99 (SVDYEVFGKV…LEHSTFSICK (91 aa)) folds into the Acylphosphatase-like domain. Residues R24 and N42 contribute to the active site.

This sequence belongs to the acylphosphatase family.

The enzyme catalyses an acyl phosphate + H2O = a carboxylate + phosphate + H(+). In Xenopus laevis (African clawed frog), this protein is Acylphosphatase-1 (acyp1).